We begin with the raw amino-acid sequence, 823 residues long: Leucine--tRNA ligase (823 aa).

The short motif at P55 to H65 is the 'HIGH' region element. The short motif at K590 to S594 is the 'KMSKS' region element. K593 is an ATP binding site.

Belongs to the class-I aminoacyl-tRNA synthetase family.

Its subcellular location is the cytoplasm. It carries out the reaction tRNA(Leu) + L-leucine + ATP = L-leucyl-tRNA(Leu) + AMP + diphosphate. The chain is Leucine--tRNA ligase from Deinococcus radiodurans (strain ATCC 13939 / DSM 20539 / JCM 16871 / CCUG 27074 / LMG 4051 / NBRC 15346 / NCIMB 9279 / VKM B-1422 / R1).